The primary structure comprises 407 residues: P2X receptor D (407 aa).

Over Met-1–Leu-22 the chain is Cytoplasmic. A helical membrane pass occupies residues Gly-23–Ile-43. Topologically, residues Tyr-44–Asn-300 are lumenal. Residues Arg-283 to Ile-296 are pore-forming motif. A helical transmembrane segment spans residues Phe-301 to Leu-321. The Cytoplasmic segment spans residues Val-322–Leu-407. The interval Lys-371–Asn-394 is disordered. The span at Asp-381–Asp-391 shows a compositional bias: acidic residues.

This sequence belongs to the P2X receptor family.

The protein resides in the contractile vacuole membrane. P2X receptors are ligand-gated ion channels that play a role in intracellular calcium signaling. ATP does not evoke inward currents in p2xD. Not essential for osmoregulation. This is P2X receptor D (p2xD) from Dictyostelium discoideum (Social amoeba).